The sequence spans 242 residues: Carboxy-S-adenosyl-L-methionine synthase (242 aa).

S-adenosyl-L-methionine is bound by residues Tyr-39, 64-66 (GCS), 89-90 (DN), 117-118 (DI), Asn-132, and Arg-199.

The protein belongs to the class I-like SAM-binding methyltransferase superfamily. Cx-SAM synthase family. As to quaternary structure, homodimer.

The catalysed reaction is prephenate + S-adenosyl-L-methionine = carboxy-S-adenosyl-L-methionine + 3-phenylpyruvate + H2O. Catalyzes the conversion of S-adenosyl-L-methionine (SAM) to carboxy-S-adenosyl-L-methionine (Cx-SAM). The sequence is that of Carboxy-S-adenosyl-L-methionine synthase from Aliivibrio fischeri (strain ATCC 700601 / ES114) (Vibrio fischeri).